A 298-amino-acid polypeptide reads, in one-letter code: Short-chain dehydrogenase reductase 4 (298 aa).

NAD(+) is bound at residue 50-74 (IITGGASGIGAEAVRLFTDHGAKVV). Ser182 provides a ligand contact to substrate. Catalysis depends on Tyr195, which acts as the Proton acceptor.

The protein belongs to the short-chain dehydrogenases/reductases (SDR) family.

This Arabidopsis thaliana (Mouse-ear cress) protein is Short-chain dehydrogenase reductase 4 (SDR4).